Consider the following 185-residue polypeptide: Ribosome-recycling factor (185 aa).

The protein belongs to the RRF family.

It localises to the cytoplasm. In terms of biological role, responsible for the release of ribosomes from messenger RNA at the termination of protein biosynthesis. May increase the efficiency of translation by recycling ribosomes from one round of translation to another. In Hahella chejuensis (strain KCTC 2396), this protein is Ribosome-recycling factor.